The chain runs to 151 residues: MPELKVEVIPEGTVIDHIPAGKWLKVIEILGLTKPNGGTLLIASNVPSKKLGRKDIVKVEGRYLSEEEVNKIALIAPDATVNIVRDYKIVEKFKVSIPDEIVGILTCPNPNCVSNHEYVRPRFKVESREPLKLRCHYCERTIEGEEIIGNL.

The Zn(2+) site is built by Cys-107, Cys-112, Cys-135, and Cys-138.

It belongs to the PyrI family. Contains catalytic and regulatory chains. Zn(2+) is required as a cofactor.

Its function is as follows. Involved in allosteric regulation of aspartate carbamoyltransferase. In Thermococcus gammatolerans (strain DSM 15229 / JCM 11827 / EJ3), this protein is Aspartate carbamoyltransferase regulatory chain.